We begin with the raw amino-acid sequence, 287 residues long: 4-hydroxybenzoate octaprenyltransferase (287 aa).

A run of 8 helical transmembrane segments spans residues 19-39 (IGSLLLLWPTLWALFLAADGL), 42-62 (WHVLIVFVLGVVFMRSAGCVI), 95-115 (FFAVLVVCSFLLVLTMNTLTI), 136-156 (YLPQFVLGLAFSWAIPMAYAA), 166-186 (WLLFVINALWTIAYDTQYAMV), 210-230 (IIGLLQLSVLALLIVLGSQLA), 233-253 (GIYYWGILAAAGFFVYQQWLI), and 264-284 (AFLNNNYVGGLIFIAISASVL).

It belongs to the UbiA prenyltransferase family. The cofactor is Mg(2+).

Its subcellular location is the cell inner membrane. It carries out the reaction all-trans-octaprenyl diphosphate + 4-hydroxybenzoate = 4-hydroxy-3-(all-trans-octaprenyl)benzoate + diphosphate. The protein operates within cofactor biosynthesis; ubiquinone biosynthesis. Functionally, catalyzes the prenylation of para-hydroxybenzoate (PHB) with an all-trans polyprenyl group. Mediates the second step in the final reaction sequence of ubiquinone-8 (UQ-8) biosynthesis, which is the condensation of the polyisoprenoid side chain with PHB, generating the first membrane-bound Q intermediate 3-octaprenyl-4-hydroxybenzoate. In Aliivibrio fischeri (strain MJ11) (Vibrio fischeri), this protein is 4-hydroxybenzoate octaprenyltransferase.